We begin with the raw amino-acid sequence, 547 residues long: Beta,beta-carotene 15,15'-dioxygenase (547 aa).

Residues histidine 172, histidine 237, histidine 308, and histidine 514 each coordinate Fe cation. A compositionally biased stretch (basic and acidic residues) spans 528 to 540; sequence QAASEEQRDRASD. The interval 528 to 547 is disordered; sequence QAASEEQRDRASDCHGAPLT.

It belongs to the carotenoid oxygenase family. It depends on Fe(2+) as a cofactor. Highly expressed in retinal pigment epithelium. Also expressed in kidney, testis, liver, brain, small intestine and colon.

It localises to the cytoplasm. The protein resides in the cytosol. It catalyses the reaction all-trans-beta-carotene + O2 = 2 all-trans-retinal. It participates in cofactor metabolism; retinol metabolism. Its function is as follows. Symmetrically cleaves beta-carotene into two molecules of retinal using a dioxygenase mechanism. The polypeptide is Beta,beta-carotene 15,15'-dioxygenase (Homo sapiens (Human)).